The following is a 198-amino-acid chain: Recombination protein RecR (198 aa).

The C4-type zinc-finger motif lies at 57–72 (CSECGHITEQDPCYIC). The 96-residue stretch at 80–175 (SVICVVEDDK…TVTRLAQGLS (96 aa)) folds into the Toprim domain.

Belongs to the RecR family.

Functionally, may play a role in DNA repair. It seems to be involved in an RecBC-independent recombinational process of DNA repair. It may act with RecF and RecO. This chain is Recombination protein RecR, found in Staphylococcus saprophyticus subsp. saprophyticus (strain ATCC 15305 / DSM 20229 / NCIMB 8711 / NCTC 7292 / S-41).